A 356-amino-acid polypeptide reads, in one-letter code: Histidinol-phosphate aminotransferase 2 (356 aa).

At lysine 213 the chain carries N6-(pyridoxal phosphate)lysine.

It belongs to the class-II pyridoxal-phosphate-dependent aminotransferase family. Histidinol-phosphate aminotransferase subfamily. Homodimer. Pyridoxal 5'-phosphate is required as a cofactor.

The catalysed reaction is L-histidinol phosphate + 2-oxoglutarate = 3-(imidazol-4-yl)-2-oxopropyl phosphate + L-glutamate. Its pathway is amino-acid biosynthesis; L-histidine biosynthesis; L-histidine from 5-phospho-alpha-D-ribose 1-diphosphate: step 7/9. The polypeptide is Histidinol-phosphate aminotransferase 2 (Burkholderia mallei (strain ATCC 23344)).